The following is a 114-amino-acid chain: Cell cycle protein GpsB (114 aa).

Residues 42 to 77 (YQKMADMNNEVVKLSEENHKLKKELEELRLRVATSR) adopt a coiled-coil conformation. A disordered region spans residues 74–99 (ATSRPQDNKSFSSNNTTTNTSSNNVD). Over residues 85–97 (SSNNTTTNTSSNN) the composition is skewed to low complexity.

The protein belongs to the GpsB family. As to quaternary structure, forms polymers through the coiled coil domains. Interacts with PBP1, MreC and EzrA.

It localises to the cytoplasm. Functionally, divisome component that associates with the complex late in its assembly, after the Z-ring is formed, and is dependent on DivIC and PBP2B for its recruitment to the divisome. Together with EzrA, is a key component of the system that regulates PBP1 localization during cell cycle progression. Its main role could be the removal of PBP1 from the cell pole after pole maturation is completed. Also contributes to the recruitment of PBP1 to the division complex. Not essential for septum formation. The chain is Cell cycle protein GpsB from Staphylococcus aureus (strain Mu3 / ATCC 700698).